A 178-amino-acid polypeptide reads, in one-letter code: Large ribosomal subunit protein uL6 (178 aa).

This sequence belongs to the universal ribosomal protein uL6 family. As to quaternary structure, part of the 50S ribosomal subunit.

Its function is as follows. This protein binds to the 23S rRNA, and is important in its secondary structure. It is located near the subunit interface in the base of the L7/L12 stalk, and near the tRNA binding site of the peptidyltransferase center. The sequence is that of Large ribosomal subunit protein uL6 from Buchnera aphidicola subsp. Schizaphis graminum (strain Sg).